A 114-amino-acid chain; its full sequence is Amphinase-2 (114 aa).

Histidine 15 functions as the Proton acceptor in the catalytic mechanism. 4 disulfide bridges follow: cysteine 26–cysteine 79, cysteine 41–cysteine 85, cysteine 59–cysteine 100, and cysteine 97–cysteine 114. Residue asparagine 27 is glycosylated (N-linked (GlcNAc...) asparagine). 42-46 (KPINT) contacts substrate. Asparagine 67 and asparagine 91 each carry an N-linked (GlcNAc...) asparagine glycan. Histidine 107 (proton donor) is an active-site residue.

This sequence belongs to the pancreatic ribonuclease family. In terms of assembly, monomer. Post-translationally, there are at least four different forms arising from glycan heterogeneity.

Its subcellular location is the secreted. Endonuclease, hydrolyzes highly polymerized RNA, poly(U) and poly(C), and the dinucleotides CpA and UpA. Hydrolyzes 18S and 28S ribosomal RNA. More active towards rCA than rUA or rUG. Has cytotoxic activity against cultured human submaxillary gland carcinoma cells. This chain is Amphinase-2, found in Lithobates pipiens (Northern leopard frog).